A 301-amino-acid chain; its full sequence is Acetylglutamate kinase (301 aa).

Residues 64–65 (GG), R86, and N181 each bind substrate.

The protein belongs to the acetylglutamate kinase family. ArgB subfamily.

It localises to the cytoplasm. It carries out the reaction N-acetyl-L-glutamate + ATP = N-acetyl-L-glutamyl 5-phosphate + ADP. It participates in amino-acid biosynthesis; L-arginine biosynthesis; N(2)-acetyl-L-ornithine from L-glutamate: step 2/4. Catalyzes the ATP-dependent phosphorylation of N-acetyl-L-glutamate. The sequence is that of Acetylglutamate kinase from Aliarcobacter butzleri (strain RM4018) (Arcobacter butzleri).